A 188-amino-acid polypeptide reads, in one-letter code: Peptidyl-tRNA hydrolase (188 aa).

Phe15 is a binding site for tRNA. His20 functions as the Proton acceptor in the catalytic mechanism. TRNA is bound by residues Tyr64, Asn66, and Asn112.

Belongs to the PTH family. Monomer.

Its subcellular location is the cytoplasm. The catalysed reaction is an N-acyl-L-alpha-aminoacyl-tRNA + H2O = an N-acyl-L-amino acid + a tRNA + H(+). Hydrolyzes ribosome-free peptidyl-tRNAs (with 1 or more amino acids incorporated), which drop off the ribosome during protein synthesis, or as a result of ribosome stalling. Its function is as follows. Catalyzes the release of premature peptidyl moieties from peptidyl-tRNA molecules trapped in stalled 50S ribosomal subunits, and thus maintains levels of free tRNAs and 50S ribosomes. This chain is Peptidyl-tRNA hydrolase, found in Borrelia turicatae (strain 91E135).